A 319-amino-acid chain; its full sequence is ATP-dependent 6-phosphofructokinase (319 aa).

Glycine 11 lines the ATP pocket. An ADP-binding site is contributed by 21–25 (RSIAR). Residues 72–73 (RC) and 102–105 (GDGS) contribute to the ATP site. Aspartate 103 provides a ligand contact to Mg(2+). A substrate-binding site is contributed by 125-127 (TID). Aspartate 127 serves as the catalytic Proton acceptor. Residue arginine 154 participates in ADP binding. Residues arginine 162 and 169 to 171 (MGR) contribute to the substrate site. Residues 185 to 187 (GAE), arginine 211, and 213 to 215 (KLH) contribute to the ADP site. Substrate is bound by residues glutamate 222, lysine 243, and 249–252 (HVQR).

This sequence belongs to the phosphofructokinase type A (PFKA) family. ATP-dependent PFK group I subfamily. Prokaryotic clade 'B1' sub-subfamily. Homotetramer. It depends on Mg(2+) as a cofactor.

The protein localises to the cytoplasm. It carries out the reaction beta-D-fructose 6-phosphate + ATP = beta-D-fructose 1,6-bisphosphate + ADP + H(+). Its pathway is carbohydrate degradation; glycolysis; D-glyceraldehyde 3-phosphate and glycerone phosphate from D-glucose: step 3/4. With respect to regulation, allosterically activated by ADP and other diphosphonucleosides, and allosterically inhibited by phosphoenolpyruvate. Catalyzes the phosphorylation of D-fructose 6-phosphate to fructose 1,6-bisphosphate by ATP, the first committing step of glycolysis. The polypeptide is ATP-dependent 6-phosphofructokinase (Finegoldia magna (strain ATCC 29328 / DSM 20472 / WAL 2508) (Peptostreptococcus magnus)).